The primary structure comprises 351 residues: Methylthioribose-1-phosphate isomerase (351 aa).

Substrate-binding positions include 51–53, Arg94, and Gln199; that span reads RGA. The Proton donor role is filled by Asp240. Residue 250 to 251 coordinates substrate; sequence NK.

Belongs to the EIF-2B alpha/beta/delta subunits family. MtnA subfamily. As to quaternary structure, homodimer.

It carries out the reaction 5-(methylsulfanyl)-alpha-D-ribose 1-phosphate = 5-(methylsulfanyl)-D-ribulose 1-phosphate. The protein operates within amino-acid biosynthesis; L-methionine biosynthesis via salvage pathway; L-methionine from S-methyl-5-thio-alpha-D-ribose 1-phosphate: step 1/6. Catalyzes the interconversion of methylthioribose-1-phosphate (MTR-1-P) into methylthioribulose-1-phosphate (MTRu-1-P). The sequence is that of Methylthioribose-1-phosphate isomerase from Bacillus cereus (strain ZK / E33L).